A 341-amino-acid chain; its full sequence is Ketol-acid reductoisomerase (NADP(+)) (341 aa).

In terms of domain architecture, KARI N-terminal Rossmann spans 1 to 182 (MATIYYDKDA…GCTRAGVLET (182 aa)). NADP(+) is bound by residues 25–28 (YGSQ), Ser51, Ser53, and 83–86 (DQTQ). The active site involves His108. NADP(+) is bound at residue Gly134. The KARI C-terminal knotted domain occupies 183 to 328 (TFKEETETDL…KRLRDMMSWI (146 aa)). Mg(2+) contacts are provided by Asp191, Glu195, Glu227, and Glu231. Substrate is bound at residue Ser252.

It belongs to the ketol-acid reductoisomerase family. The cofactor is Mg(2+).

It carries out the reaction (2R)-2,3-dihydroxy-3-methylbutanoate + NADP(+) = (2S)-2-acetolactate + NADPH + H(+). The enzyme catalyses (2R,3R)-2,3-dihydroxy-3-methylpentanoate + NADP(+) = (S)-2-ethyl-2-hydroxy-3-oxobutanoate + NADPH + H(+). Its pathway is amino-acid biosynthesis; L-isoleucine biosynthesis; L-isoleucine from 2-oxobutanoate: step 2/4. It functions in the pathway amino-acid biosynthesis; L-valine biosynthesis; L-valine from pyruvate: step 2/4. Functionally, involved in the biosynthesis of branched-chain amino acids (BCAA). Catalyzes an alkyl-migration followed by a ketol-acid reduction of (S)-2-acetolactate (S2AL) to yield (R)-2,3-dihydroxy-isovalerate. In the isomerase reaction, S2AL is rearranged via a Mg-dependent methyl migration to produce 3-hydroxy-3-methyl-2-ketobutyrate (HMKB). In the reductase reaction, this 2-ketoacid undergoes a metal-dependent reduction by NADPH to yield (R)-2,3-dihydroxy-isovalerate. In Anaeromyxobacter dehalogenans (strain 2CP-C), this protein is Ketol-acid reductoisomerase (NADP(+)).